We begin with the raw amino-acid sequence, 631 residues long: Glycosyltransferase-like protein LARGE (631 aa).

At 1–6 (MQSNYS) the chain is on the cytoplasmic side. Residues 7–27 (ISYFLLILFTGTSSYFTIWNF) traverse the membrane as a helical; Signal-anchor for type II membrane protein segment. The Lumenal segment spans residues 28–631 (VDHTRVGAFP…TASRLGIKLR (604 aa)). N-linked (GlcNAc...) asparagine glycans are attached at residues N95, N105, N167, N177, N287, N400, N485, N502, N521, N529, and N593.

This sequence belongs to the glycosyltransferase 8 family.

It is found in the golgi apparatus membrane. Functionally, probable glycosyltransferase. The protein is Glycosyltransferase-like protein LARGE (lge-1) of Caenorhabditis elegans.